The following is a 338-amino-acid chain: Protein WVD2-like 2 (338 aa).

Residues 1-14 (MGRELVDKHMDKKA) are compositionally biased toward basic and acidic residues. The tract at residues 1–150 (MGRELVDKHM…SFSVASSSAT (150 aa)) is disordered. Polar residues-rich tracts occupy residues 15–37 (NSLTASSTGSSDDNKVPSPSTNE) and 59–69 (QGITETPGSHK). Positions 100–115 (NNSLGNGASHNSSSAS) are enriched in low complexity. Positions 128-138 (RIPDHKMHHDE) are enriched in basic and acidic residues. The stretch at 177-214 (REFYQKLEEKQKALEAEKRENEKRLKEEQEAVTKQLRK) forms a coiled coil. The tract at residues 222–338 (PVPSFYQEGP…GENGVGVVEE (117 aa)) is disordered. Residues 288–300 (TNSVPRTPNSSSK) are compositionally biased toward polar residues.

This sequence belongs to the TPX2 family. In terms of tissue distribution, expressed in seedlings.

The protein resides in the cytoplasm. The protein localises to the cytoskeleton. Its function is as follows. Microtubule-associated protein (MAP) that regulates the orientation of interphase cortical microtubules. The polypeptide is Protein WVD2-like 2 (Arabidopsis thaliana (Mouse-ear cress)).